A 705-amino-acid polypeptide reads, in one-letter code: MQPTATMATAATTTTTTTATVALTTSWDNATGRPTAEPDPILDNYVLLVVVMSLFVGGTLVVLSGVLLLCKRCWDVHQRLNRAMEEAEKTTTTYLDNGTHPAQDPDFRGEDPECQDAETERFLSTSSTGRRVSFNEAALFEQSRKTQDKGRRYTLTEGDFHHLKNARLTHLHLPPLKIVTIHECDSGEASSATTPHPATSPKATLAIFQPPGKALTGRSVGPSSALPGDPYNSAAGATDFAEISPSASSDSGEGTSLDAGTRSTKAGGPGAAAGPGEAGPGSGAGTVLQFLTRLRRHASLDGASPYFKVKKWKLEPSQRAASLDTRGSPKRHHFQRQRAASESTEQEEGDAPQEDFIQYIARAGDAVAFPHPRPFLASPPPALGRLEAAEAAGGASPDSPPERGAGSAGPEQQQPPLEPDAERDAGPEQAQTSYRDLWSLRASLELHAAASDHSSSGNDRDSVRSGDSSGSGSGGAAPAFPPPSPPAPRPKDGEARRLLQMDSGYASIEGRGAGDDTEPPAAPARPRSPRAWPRRPRRDYSIDEKTDALFHEFLRHDPHFDDTPAAARHRARAHPHARKQWQRGRQHSDPGARAAPALAGTPAPPAGAARPARAPLRRGDSVDGPPDGRTLGGAGDDPAIPVIEEEPGGGGCPGSGLCVLPSGSVLDKLAAGLDERLFPPRLAEPVVATPALVAAAPTSPDHSPA.

The Extracellular portion of the chain corresponds to 1–45 (MQPTATMATAATTTTTTTATVALTTSWDNATGRPTAEPDPILDNY). Residue Asn29 is glycosylated (N-linked (GlcNAc...) asparagine). The chain crosses the membrane as a helical; Signal-anchor for type III membrane protein span at residues 46–66 (VLLVVVMSLFVGGTLVVLSGV). At 67-705 (LLLCKRCWDV…APTSPDHSPA (639 aa)) the chain is on the cytoplasmic side. 2 disordered regions span residues 91-113 (TTTYLDNGTHPAQDPDFRGEDPE) and 212-284 (GKAL…GSGA). A compositionally biased stretch (polar residues) spans 245 to 254 (PSASSDSGEG). Over residues 267–284 (GGPGAAAGPGEAGPGSGA) the composition is skewed to gly residues. Residues Ser299 and Ser304 each carry the phosphoserine modification. 4 disordered regions span residues 316 to 353 (PSQRAASLDTRGSPKRHHFQRQRAASESTEQEEGDAPQ), 369 to 436 (FPHP…SYRD), 448 to 540 (AAAS…RRDY), and 559 to 655 (HFDD…CPGS). Residues 344 to 353 (TEQEEGDAPQ) show a composition bias toward acidic residues. Over residues 371 to 382 (HPRPFLASPPPA) the composition is skewed to pro residues. Low complexity predominate over residues 383–397 (LGRLEAAEAAGGASP). The span at 479–488 (AFPPPSPPAP) shows a compositional bias: pro residues. Basic and acidic residues predominate over residues 489–499 (RPKDGEARRLL). 2 positions are modified to phosphoserine: Ser507 and Ser528. Residues 567–585 (ARHRARAHPHARKQWQRGR) show a composition bias toward basic residues. Residues 591-614 (GARAAPALAGTPAPPAGAARPARA) are compositionally biased toward low complexity. At Ser621 the chain carries Phosphoserine. Thr698 is subject to Phosphothreonine. Residues Ser699 and Ser703 each carry the phosphoserine modification.

As to quaternary structure, interacts with voltage-dependent calcium channels CACNB1, CACNB2, CACNB3 and CACNB4 beta subunits; prevents their interaction with the CACNA1C alpha subunit thereby negatively regulating the activity of the corresponding calcium channels.

It localises to the cytoplasmic vesicle. The protein localises to the secretory vesicle. It is found in the synaptic vesicle membrane. The protein resides in the cell membrane. Its subcellular location is the cell projection. It localises to the growth cone. Functionally, negatively regulates voltage-gated calcium channels by preventing the interaction between their alpha and beta subunits. Thereby, negatively regulates calcium channels activity at the plasma membrane and indirectly inhibits calcium-regulated exocytosis. The sequence is that of Voltage-dependent calcium channel beta subunit-associated regulatory protein from Homo sapiens (Human).